The following is a 116-amino-acid chain: Iron-sulfur cluster insertion protein ErpA (116 aa).

Iron-sulfur cluster-binding residues include Cys-44, Cys-108, and Cys-110.

The protein belongs to the HesB/IscA family. Homodimer. It depends on iron-sulfur cluster as a cofactor.

Required for insertion of 4Fe-4S clusters for at least IspG. The chain is Iron-sulfur cluster insertion protein ErpA from Idiomarina loihiensis (strain ATCC BAA-735 / DSM 15497 / L2-TR).